The sequence spans 424 residues: Enolase (424 aa).

Residue Q163 coordinates (2R)-2-phosphoglycerate. The active-site Proton donor is the E205. Residues D242, E285, and D312 each coordinate Mg(2+). (2R)-2-phosphoglycerate contacts are provided by K337, R366, S367, and K388. K337 serves as the catalytic Proton acceptor.

Belongs to the enolase family. Mg(2+) serves as cofactor.

The protein localises to the cytoplasm. It localises to the secreted. Its subcellular location is the cell surface. The catalysed reaction is (2R)-2-phosphoglycerate = phosphoenolpyruvate + H2O. It functions in the pathway carbohydrate degradation; glycolysis; pyruvate from D-glyceraldehyde 3-phosphate: step 4/5. Its function is as follows. Catalyzes the reversible conversion of 2-phosphoglycerate (2-PG) into phosphoenolpyruvate (PEP). It is essential for the degradation of carbohydrates via glycolysis. The polypeptide is Enolase (Dinoroseobacter shibae (strain DSM 16493 / NCIMB 14021 / DFL 12)).